Here is a 207-residue protein sequence, read N- to C-terminus: Peptidyl-tRNA hydrolase (207 aa).

TRNA is bound at residue Tyr-14. The active-site Proton acceptor is the His-19. Positions 64, 66, and 112 each coordinate tRNA.

It belongs to the PTH family. In terms of assembly, monomer.

The protein localises to the cytoplasm. The catalysed reaction is an N-acyl-L-alpha-aminoacyl-tRNA + H2O = an N-acyl-L-amino acid + a tRNA + H(+). Functionally, hydrolyzes ribosome-free peptidyl-tRNAs (with 1 or more amino acids incorporated), which drop off the ribosome during protein synthesis, or as a result of ribosome stalling. In terms of biological role, catalyzes the release of premature peptidyl moieties from peptidyl-tRNA molecules trapped in stalled 50S ribosomal subunits, and thus maintains levels of free tRNAs and 50S ribosomes. This chain is Peptidyl-tRNA hydrolase, found in Rhodopseudomonas palustris (strain BisB5).